The following is a 1449-amino-acid chain: DNA polymerase III PolC-type (1449 aa).

The segment at 194–231 (AQEKPVKKESSDNKHKSNGGNKGGYEKKSYKDEPKNEN) is disordered. Basic and acidic residues-rich tracts occupy residues 197–208 (KPVKKESSDNKH) and 217–229 (GYEK…EPKN). Residues 435-590 (YVVFDIETTG…DDAKATAEIL (156 aa)) enclose the Exonuclease domain.

It belongs to the DNA polymerase type-C family. PolC subfamily.

It localises to the cytoplasm. It carries out the reaction DNA(n) + a 2'-deoxyribonucleoside 5'-triphosphate = DNA(n+1) + diphosphate. Functionally, required for replicative DNA synthesis. This DNA polymerase also exhibits 3' to 5' exonuclease activity. This Clostridium perfringens (strain 13 / Type A) protein is DNA polymerase III PolC-type.